We begin with the raw amino-acid sequence, 101 residues long: ATP-dependent Clp protease adapter protein ClpS (101 aa).

The disordered stretch occupies residues 1 to 24 (MVVASAPAKPGSVGQQESASRDAT). Residues 13 to 23 (VGQQESASRDA) are compositionally biased toward polar residues.

The protein belongs to the ClpS family. As to quaternary structure, binds to the N-terminal domain of the chaperone ClpA.

In terms of biological role, involved in the modulation of the specificity of the ClpAP-mediated ATP-dependent protein degradation. In Mycobacterium marinum (strain ATCC BAA-535 / M), this protein is ATP-dependent Clp protease adapter protein ClpS.